The sequence spans 240 residues: Proteasome subunit alpha (240 aa).

The protein belongs to the peptidase T1A family. As to quaternary structure, the 20S proteasome core is composed of 14 alpha and 14 beta subunits that assemble into four stacked heptameric rings, resulting in a barrel-shaped structure. The two inner rings, each composed of seven catalytic beta subunits, are sandwiched by two outer rings, each composed of seven alpha subunits. The catalytic chamber with the active sites is on the inside of the barrel. Has a gated structure, the ends of the cylinder being occluded by the N-termini of the alpha-subunits. Is capped by the proteasome-associated ATPase, ARC.

It localises to the cytoplasm. It functions in the pathway protein degradation; proteasomal Pup-dependent pathway. The formation of the proteasomal ATPase ARC-20S proteasome complex, likely via the docking of the C-termini of ARC into the intersubunit pockets in the alpha-rings, may trigger opening of the gate for substrate entry. Interconversion between the open-gate and close-gate conformations leads to a dynamic regulation of the 20S proteasome proteolysis activity. In terms of biological role, component of the proteasome core, a large protease complex with broad specificity involved in protein degradation. The polypeptide is Proteasome subunit alpha (Frankia casuarinae (strain DSM 45818 / CECT 9043 / HFP020203 / CcI3)).